We begin with the raw amino-acid sequence, 318 residues long: Olfactory receptor 13C7 (318 aa).

The Extracellular portion of the chain corresponds to methionine 1–threonine 27. A helical membrane pass occupies residues phenylalanine 28–leucine 48. Residues methionine 49–tyrosine 61 lie on the Cytoplasmic side of the membrane. Residues phenylalanine 62–isoleucine 82 traverse the membrane as a helical segment. The Extracellular segment spans residues leucine 83–valine 100. A helical membrane pass occupies residues glutamine 101 to phenylalanine 121. The Cytoplasmic segment spans residues aspartate 122 to glutamate 181. A helical transmembrane segment spans residues isoleucine 182 to valine 202. Topologically, residues threonine 203–valine 205 are extracellular. The helical transmembrane segment at isoleucine 206–isoleucine 226 threads the bilayer. Residues leucine 227–alanine 238 are Cytoplasmic-facing. A helical membrane pass occupies residues phenylalanine 239–methionine 259. At tyrosine 260–aspartate 278 the chain is on the extracellular side. The chain crosses the membrane as a helical span at residues lysine 279–threonine 289. Topologically, residues proline 290–alanine 318 are cytoplasmic.

The protein belongs to the G-protein coupled receptor 1 family.

It localises to the cell membrane. Its function is as follows. Odorant receptor. The chain is Olfactory receptor 13C7 from Homo sapiens (Human).